Here is a 473-residue protein sequence, read N- to C-terminus: H(+)/Cl(-) exchange transporter ClcA (473 aa).

Topologically, residues 1-32 (MKTDTSTFLAQQIVRLRRRDQIRRLMQRDKTP) are cytoplasmic. Residues 33–69 (LAILFMAAVVGTLTGLVGVAFEKTVSWVQNMRIGALV) traverse the membrane as a helical segment. At 70–76 (QVADHAF) the chain is on the periplasmic side. A helical membrane pass occupies residues 77–100 (LLWPLAFILSALLAMVGYFLVRKF). A Selectivity filter part_1 motif is present at residues 106-110 (GSGIP). S107 is a chloride binding site. The helical intramembrane region spans 109-116 (IPEIEGAL). Residues 117–123 (EELRPVR) are Cytoplasmic-facing. A run of 2 helical transmembrane segments spans residues 124 to 141 (WWRVLPVKFIGGMGTLGA) and 148 to 166 (EGPTVQIGGNLGRMVLDVF). Positions 146 to 150 (GREGP) match the Selectivity filter part_2 motif. The Cytoplasmic segment spans residues 167–176 (RMRSAEARHT). Intramembrane regions (helical) lie at residues 177–189 (LLATGAAAGLSAA) and 193–201 (PLAGILFII). The Cytoplasmic portion of the chain corresponds to 202–214 (EEMRPQFRYNLIS). The chain crosses the membrane as a helical span at residues 215–232 (IKAVFTGVIMSSIVFRIF). Topologically, residues 233–252 (NGEAPIIEVGKLSDAPVNTL) are periplasmic. A helical transmembrane segment spans residues 253–281 (WLYLILGIIFGCVGPVFNSLVLRTQDMFQ). Over 282–287 (RFHGGE) the chain is Cytoplasmic. The helical transmembrane segment at 288–309 (IKKWVLMGGAIGGLCGILGLIE) threads the bilayer. Residues 310-329 (PAAAGGGFNLIPIAAAGNFS) are Periplasmic-facing. Transmembrane regions (helical) follow at residues 330-349 (VGLLLFIFITRVVTTLLCFS) and 355-376 (GIFAPMLALGTLLGTAFGMAAA). A Selectivity filter part_3 motif is present at residues 355–359 (GIFAP). Residues I356 and F357 each contribute to the chloride site. Residues 377–386 (VLFPQYHPEA) are Periplasmic-facing. The segment at residues 387–401 (GTFAIAGMGALMAAS) is an intramembrane region (helical). An intramembrane region (note=Loop between two helices) is located at residues 402–404 (VRA). An intramembrane region (helical) is located at residues 405 to 416 (PLTGIVLVLEMT). An intramembrane region (note=Loop between two helices) is located at residues 417-421 (DNYQL). The helical transmembrane segment at 422 to 438 (ILPMIITCLGATLLAQF) threads the bilayer. Topologically, residues 439–473 (LGGKPLYSTILARTLAKQDAEQAAKNQNAPAGENT) are cytoplasmic. Residue Y445 coordinates chloride.

This sequence belongs to the chloride channel (TC 2.A.49) family. ClcA subfamily. As to quaternary structure, homodimer.

The protein resides in the cell inner membrane. It carries out the reaction 2 chloride(in) + H(+)(out) = 2 chloride(out) + H(+)(in). Its function is as follows. Proton-coupled chloride transporter. Functions as antiport system and exchanges two chloride ions for 1 proton. Probably acts as an electrical shunt for an outwardly-directed proton pump that is linked to amino acid decarboxylation, as part of the extreme acid resistance (XAR) response. This is H(+)/Cl(-) exchange transporter ClcA from Salmonella paratyphi A (strain AKU_12601).